A 107-amino-acid polypeptide reads, in one-letter code: Glutaconyl-CoA decarboxylase subunit delta (107 aa).

A helical transmembrane segment spans residues 10–32; sequence MINMTIVFGVLIVLGILMVLIHA. The interval 37–60 is disordered; it reads KKVQGKKKPVVAKPAPSAAASKRQ. The span at 47–57 shows a compositional bias: low complexity; it reads VAKPAPSAAAS.

Belongs to the OadG family. Heterooctamer consisting of two alpha, two beta, two gamma and two delta subunits.

The protein localises to the cell membrane. It carries out the reaction (2E)-glutaconyl-CoA + Na(+)(in) + H(+) = (2E)-butenoyl-CoA + Na(+)(out) + CO2. It participates in amino-acid degradation; L-glutamate degradation via hydroxyglutarate pathway; crotonoyl-CoA from L-glutamate: step 5/5. Part of the primary sodium pump glutaconyl-CoA decarboxylase (GCD). Possible membrane anchor for the alpha subunit. In Acidaminococcus fermentans (strain ATCC 25085 / DSM 20731 / CCUG 9996 / CIP 106432 / VR4), this protein is Glutaconyl-CoA decarboxylase subunit delta (gcdD).